Consider the following 217-residue polypeptide: Large ribosomal subunit protein uL3 (217 aa).

The interval 129 to 162 (SRGPMSHGSKNHRAPGSTGAGTTPGRIYPGKRMA) is disordered. Residues 142–153 (APGSTGAGTTPG) show a composition bias toward low complexity.

The protein belongs to the universal ribosomal protein uL3 family. Part of the 50S ribosomal subunit. Forms a cluster with proteins L14 and L19.

Its function is as follows. One of the primary rRNA binding proteins, it binds directly near the 3'-end of the 23S rRNA, where it nucleates assembly of the 50S subunit. The chain is Large ribosomal subunit protein uL3 from Prochlorococcus marinus (strain MIT 9215).